A 553-amino-acid polypeptide reads, in one-letter code: Thermosome subunit beta (553 aa).

Positions 534 to 553 (KKSEGKTGEKKESEKGKEED) are disordered.

Belongs to the TCP-1 chaperonin family. In terms of assembly, forms a Heterooligomeric complex of two stacked eight-membered rings.

Its function is as follows. Molecular chaperone; binds unfolded polypeptides in vitro, and has a weak ATPase activity. This is Thermosome subunit beta (thsB) from Sulfolobus acidocaldarius (strain ATCC 33909 / DSM 639 / JCM 8929 / NBRC 15157 / NCIMB 11770).